Here is a 511-residue protein sequence, read N- to C-terminus: MLLAELAQVSLEVAATSARSRKTALLAGLFRNAGPEDVPVVIPYLAGRLPQGRIGVGWRSLGEPVEPACDPTLTVTGVDAELTALAATSGPGSQARRRERLRTLFAAATADEQRFLRALLTGEVRQGALDAVAADALAHAAGAPPADVRRAVMLAGSLQDVATVLLADGPGALADFRLTVGRPVQPMLARSAASVGEALDKLGPCAVEEKLDGIRVQVHRDGERIRAYTRTLDDITDRLPELVSAVAALHARRFVLDGELIALGEDGRPRPFQETASRVGSRRDVAGAAAHVPVVPVFFDALRVDGEDLLDRPFADRHAALARLLPDDLRVRRTVVADPDAPEARAAADAFLAATLERGHEGVVVKDLAAAYSAGRRGASWLKVKPVHTLDLVVLAVERGSGRRTGKLSNLHLGARRPDGTFAMLGKTFKGLTDALLDWQTARLRELATDDDGHVVTVRPELVVEIAYDGLQRSTRYPAGVTLRFARVLRYREDKTAREADTVETVLSRQR.

An ATP-binding site is contributed by Glu208. Lys210 functions as the N6-AMP-lysine intermediate in the catalytic mechanism. 6 residues coordinate ATP: Arg215, Arg230, Glu259, Phe299, Arg377, and Lys383.

Belongs to the ATP-dependent DNA ligase family. Mg(2+) serves as cofactor.

The enzyme catalyses ATP + (deoxyribonucleotide)n-3'-hydroxyl + 5'-phospho-(deoxyribonucleotide)m = (deoxyribonucleotide)n+m + AMP + diphosphate.. DNA ligase that seals nicks in double-stranded DNA during DNA replication, DNA recombination and DNA repair. The polypeptide is Probable DNA ligase (Streptomyces griseus subsp. griseus (strain JCM 4626 / CBS 651.72 / NBRC 13350 / KCC S-0626 / ISP 5235)).